The sequence spans 363 residues: 3-isopropylmalate dehydrogenase (363 aa).

78–91 (GPKWEHLPPAEQPE) contacts NAD(+). Residues Arg-99, Arg-109, Arg-138, and Asp-227 each contribute to the substrate site. Asp-227, Asp-251, and Asp-255 together coordinate Mg(2+). 285–297 (GSAPDIAGKNIAN) contributes to the NAD(+) binding site.

This sequence belongs to the isocitrate and isopropylmalate dehydrogenases family. LeuB type 1 subfamily. As to quaternary structure, homodimer. Requires Mg(2+) as cofactor. It depends on Mn(2+) as a cofactor.

Its subcellular location is the cytoplasm. It catalyses the reaction (2R,3S)-3-isopropylmalate + NAD(+) = 4-methyl-2-oxopentanoate + CO2 + NADH. It functions in the pathway amino-acid biosynthesis; L-leucine biosynthesis; L-leucine from 3-methyl-2-oxobutanoate: step 3/4. Catalyzes the oxidation of 3-carboxy-2-hydroxy-4-methylpentanoate (3-isopropylmalate) to 3-carboxy-4-methyl-2-oxopentanoate. The product decarboxylates to 4-methyl-2 oxopentanoate. The protein is 3-isopropylmalate dehydrogenase of Yersinia pestis.